A 74-amino-acid polypeptide reads, in one-letter code: Conotoxin Vi15a (74 aa).

The signal sequence occupies residues 1–19 (MMPVILLLLLSLAIRCADG). Positions 20-43 (KAVQGDSDPSASLLTGDKNHDLPV) are excised as a propeptide. Trp72 carries the tryptophan amide modification.

Post-translationally, contains four disulfide bonds. Expressed by the venom duct.

The protein localises to the secreted. This chain is Conotoxin Vi15a, found in Conus virgo (Virgin cone).